Consider the following 527-residue polypeptide: Probable protein kinase UbiB (527 aa).

The helical transmembrane segment at 23–43 threads the bilayer; it reads ELLLELPLPFWLRALSWLLPW. The Protein kinase domain occupies 125 to 488; sequence RFDSQPLASA…ESDARDQWPL (364 aa). ATP-binding positions include 131-139 and lysine 153; that span reads LASASVAQV. Residue aspartate 288 is the Proton acceptor of the active site. A helical transmembrane segment spans residues 504–524; that stretch reads LAPLLATWPAWLMVGGGLYLV.

This sequence belongs to the ABC1 family. UbiB subfamily.

It localises to the cell inner membrane. It functions in the pathway cofactor biosynthesis; ubiquinone biosynthesis [regulation]. Is probably a protein kinase regulator of UbiI activity which is involved in aerobic coenzyme Q (ubiquinone) biosynthesis. This Ectopseudomonas mendocina (strain ymp) (Pseudomonas mendocina) protein is Probable protein kinase UbiB.